The following is a 171-amino-acid chain: MEKTTTQELLAQAEKICAQRNVRLTPQRLEVLRLMSLQDGAISAYDLLDLLREAEPQAKPPTVYRALDFLLEQGFVHKVESTNSYVLCHLFDQPTHTSAMFICDRCGAVKEECAEGVEDIMHTLAAKMGFALRHNVIEAHGLCAACVEVEACRHPEQCQHDHSVQVKKKPR.

The protein belongs to the Fur family.

Acts as a negative controlling element, employing Zn(2+) as a cofactor to bind the operator of the repressed genes (znuACB). The protein is Zinc uptake regulation protein (zur) of Escherichia coli (strain K12).